The following is a 380-amino-acid chain: MRGLRQGIMKQLPILEPGDKPRKATWYTLTCPGDRPCPRVGHSCSYFPPVGDAESGKIFIVGGANPNQSFSDVHTMDLGTHQWDTATREGLLPRYEHASFLPSCSPHSIWVFGGADQSGNRNCLQVMSPEDRTWSTPEVTGSPPSPRTFHTSSAAIGNQLYVFGGGERGAQPVEDVKLHVFDANTLTWSQPETHGSPPSPRHGHVMVAAGTKLFIHGGLAGDKFFDDLHCIDIGDMSWQKLGPTGAVPVGCAAHAAVAVGHHVYMFGGMTATGALNMMYKYHTEKQHWTVLQFDTSLPAGRLDHSMCVIPWPVMSTSENKDSDSVILTLQDEKGDAAEKAETQSGGPHEESPTTVLLCFVFGGMNTEGEVYDDCLVTVVD.

6 Kelch repeats span residues 57–103, 108–154, 159–211, 212–258, 262–311, and 357–380; these read KIFI…FLPS, SIWV…TSSA, QLYV…AAGT, KLFI…AAVA, HVYM…VIPW, and LCFV…TVVD.

In terms of assembly, interacts with PIKFYVE; the interaction recruits RABEPK to the endosomal membrane. Interacts with RAB9 in its GTP-bound conformation. Post-translationally, phosphorylated on Ser residues by PIKFYVE.

It localises to the cytoplasm. The protein resides in the endosome membrane. Its function is as follows. Rab9 effector required for endosome to trans-Golgi network (TGN) transport. The protein is Rab9 effector protein with kelch motifs of Mus musculus (Mouse).